Here is a 346-residue protein sequence, read N- to C-terminus: Methylthioribose-1-phosphate isomerase (346 aa).

Substrate-binding positions include 46-48 (RGA), Arg-89, and Gln-196. The Proton donor role is filled by Asp-237. 247–248 (NK) provides a ligand contact to substrate.

Belongs to the eIF-2B alpha/beta/delta subunits family. MtnA subfamily.

It catalyses the reaction 5-(methylsulfanyl)-alpha-D-ribose 1-phosphate = 5-(methylsulfanyl)-D-ribulose 1-phosphate. Its pathway is amino-acid biosynthesis; L-methionine biosynthesis via salvage pathway; L-methionine from S-methyl-5-thio-alpha-D-ribose 1-phosphate: step 1/6. In terms of biological role, catalyzes the interconversion of methylthioribose-1-phosphate (MTR-1-P) into methylthioribulose-1-phosphate (MTRu-1-P). The protein is Methylthioribose-1-phosphate isomerase of Geotalea daltonii (strain DSM 22248 / JCM 15807 / FRC-32) (Geobacter daltonii).